Reading from the N-terminus, the 270-residue chain is uncharacterized protein (270 aa).

Basic and acidic residues-rich tracts occupy residues Met-1 to Tyr-13 and Glu-49 to Lys-73. 3 disordered regions span residues Met-1–Glu-76, Ser-90–Glu-111, and Lys-204–Glu-270. The segment covering Ser-90–Thr-102 has biased composition (polar residues). Residues Lys-204–Lys-216 show a composition bias toward basic residues. A compositionally biased stretch (basic and acidic residues) spans Leu-218 to Lys-235. Basic residues predominate over residues Gln-236–Val-253.

This is an uncharacterized protein from Saccharomyces cerevisiae (strain ATCC 204508 / S288c) (Baker's yeast).